The following is a 538-amino-acid chain: CWF19-like protein 1 (538 aa).

The disordered stretch occupies residues 298–324 (QGRKRSSTGRDSKSSPHPKQPRKPPQP).

This sequence belongs to the CWF19 family. As to expression, expressed in many brain regions, including cerebellum, thalamus and occipital, parietal and temporal lobes (at protein level). Also expressed in the spinal cord (at protein level).

The polypeptide is CWF19-like protein 1 (CWF19L1) (Homo sapiens (Human)).